Consider the following 179-residue polypeptide: Large ribosomal subunit protein uL5 (179 aa).

Belongs to the universal ribosomal protein uL5 family. As to quaternary structure, part of the 50S ribosomal subunit; part of the 5S rRNA/L5/L18/L25 subcomplex. Contacts the 5S rRNA and the P site tRNA. Forms a bridge to the 30S subunit in the 70S ribosome.

In terms of biological role, this is one of the proteins that bind and probably mediate the attachment of the 5S RNA into the large ribosomal subunit, where it forms part of the central protuberance. In the 70S ribosome it contacts protein S13 of the 30S subunit (bridge B1b), connecting the 2 subunits; this bridge is implicated in subunit movement. Contacts the P site tRNA; the 5S rRNA and some of its associated proteins might help stabilize positioning of ribosome-bound tRNAs. The chain is Large ribosomal subunit protein uL5 from Bacillus anthracis (strain A0248).